Here is a 341-residue protein sequence, read N- to C-terminus: tRNA N6-adenosine threonylcarbamoyltransferase (341 aa).

Fe cation contacts are provided by His111 and His115. Residues 134–138 (LVSGG), Asp167, Gly180, and Asn277 each bind substrate. Fe cation is bound at residue Asp305.

The protein belongs to the KAE1 / TsaD family. The cofactor is Fe(2+).

It is found in the cytoplasm. The enzyme catalyses L-threonylcarbamoyladenylate + adenosine(37) in tRNA = N(6)-L-threonylcarbamoyladenosine(37) in tRNA + AMP + H(+). Its function is as follows. Required for the formation of a threonylcarbamoyl group on adenosine at position 37 (t(6)A37) in tRNAs that read codons beginning with adenine. Is involved in the transfer of the threonylcarbamoyl moiety of threonylcarbamoyl-AMP (TC-AMP) to the N6 group of A37, together with TsaE and TsaB. TsaD likely plays a direct catalytic role in this reaction. The protein is tRNA N6-adenosine threonylcarbamoyltransferase of Chromobacterium violaceum (strain ATCC 12472 / DSM 30191 / JCM 1249 / CCUG 213 / NBRC 12614 / NCIMB 9131 / NCTC 9757 / MK).